A 657-amino-acid chain; its full sequence is Probable potassium transport system protein Kup (657 aa).

The segment at 1–25 (MGSGPADEEHTVDTEPGVSPPRRTV) is disordered. Transmembrane regions (helical) follow at residues 35 to 55 (VVVG…IYTI), 77 to 97 (VVSL…VLLV), 127 to 147 (TAVL…DSMI), 165 to 185 (PGLE…LFSV), 196 to 216 (LFGP…VSGI), 234 to 254 (FFFG…LAVT), 275 to 295 (WLVL…ALLL), 315 to 335 (WPMV…VITG), 365 to 385 (IYVP…VFAF), 394 to 414 (AFGM…FYIV), 422 to 442 (LWLV…FLAA), and 447 to 467 (LVHG…VMTT).

The protein belongs to the HAK/KUP transporter (TC 2.A.72) family.

Its subcellular location is the cell membrane. The enzyme catalyses K(+)(in) + H(+)(in) = K(+)(out) + H(+)(out). Transport of potassium into the cell. Likely operates as a K(+):H(+) symporter. This is Probable potassium transport system protein Kup from Rhodococcus jostii (strain RHA1).